The sequence spans 450 residues: Phosphoglucosamine mutase (450 aa).

Ser-102 (phosphoserine intermediate) is an active-site residue. Mg(2+) contacts are provided by Ser-102, Asp-243, Asp-245, and Asp-247. The residue at position 102 (Ser-102) is a Phosphoserine.

The protein belongs to the phosphohexose mutase family. Mg(2+) is required as a cofactor. Activated by phosphorylation.

It carries out the reaction alpha-D-glucosamine 1-phosphate = D-glucosamine 6-phosphate. In terms of biological role, catalyzes the conversion of glucosamine-6-phosphate to glucosamine-1-phosphate. In Rhizobium rhizogenes (strain K84 / ATCC BAA-868) (Agrobacterium radiobacter), this protein is Phosphoglucosamine mutase.